Consider the following 192-residue polypeptide: Na(+)-translocating ferredoxin:NAD(+) oxidoreductase complex subunit A (192 aa).

6 consecutive transmembrane segments (helical) span residues 4–24 (IFIMISAIFVNNFVLSRFLGI), 38–58 (VGMGVAVTFVMALASAITYVV), 71–91 (LQTIAFILIIAALVQLVEMII), 101–121 (ALGVYLPLITTNCAVLGVALI), 133–153 (IFNGVGAALGFTLAIVLFAGI), and 169–189 (FPIALLTAGLMAIAFLGFSGM).

This sequence belongs to the NqrDE/RnfAE family. The complex is composed of six subunits: RnfA, RnfB, RnfC, RnfD, RnfE and RnfG.

It localises to the cell membrane. The enzyme catalyses 2 reduced [2Fe-2S]-[ferredoxin] + Na(+)(in) + NAD(+) + H(+) = 2 oxidized [2Fe-2S]-[ferredoxin] + Na(+)(out) + NADH. Part of a membrane-bound complex that couples electron transfer with translocation of ions across the membrane. Couples electron transfer from reduced ferredoxin to NAD(+) with electrogenic movement of Na(+) out of the cell. Involved in caffeate respiration. In Acetobacterium woodii (strain ATCC 29683 / DSM 1030 / JCM 2381 / KCTC 1655 / WB1), this protein is Na(+)-translocating ferredoxin:NAD(+) oxidoreductase complex subunit A.